The chain runs to 105 residues: U-scoloptoxin(05)-Ssd1a (105 aa).

An N-terminal signal peptide occupies residues 1-24 (MKEAVKMSCLCIFVFLFLFSLTDA). The segment at 79–105 (HVPESNQKDGKVSTHMSSCNTDGCNAN) is disordered. Residues 92-105 (THMSSCNTDGCNAN) are compositionally biased toward polar residues.

This sequence belongs to the scoloptoxin-05 family. Post-translationally, contains 4 disulfide bonds. Expressed by the venom gland.

The protein localises to the secreted. The sequence is that of U-scoloptoxin(05)-Ssd1a from Scolopendra dehaani (Thai centipede).